Here is a 443-residue protein sequence, read N- to C-terminus: Serine--tRNA ligase (443 aa).

Position 250–252 (250–252 (TSE)) interacts with L-serine. 281-283 (RSE) lines the ATP pocket. Residue glutamate 304 coordinates L-serine. An ATP-binding site is contributed by 368–371 (EISS). Serine 403 serves as a coordination point for L-serine.

Belongs to the class-II aminoacyl-tRNA synthetase family. Type-1 seryl-tRNA synthetase subfamily. In terms of assembly, homodimer. The tRNA molecule binds across the dimer.

The protein resides in the cytoplasm. The catalysed reaction is tRNA(Ser) + L-serine + ATP = L-seryl-tRNA(Ser) + AMP + diphosphate + H(+). It carries out the reaction tRNA(Sec) + L-serine + ATP = L-seryl-tRNA(Sec) + AMP + diphosphate + H(+). The protein operates within aminoacyl-tRNA biosynthesis; selenocysteinyl-tRNA(Sec) biosynthesis; L-seryl-tRNA(Sec) from L-serine and tRNA(Sec): step 1/1. In terms of biological role, catalyzes the attachment of serine to tRNA(Ser). Is also able to aminoacylate tRNA(Sec) with serine, to form the misacylated tRNA L-seryl-tRNA(Sec), which will be further converted into selenocysteinyl-tRNA(Sec). The polypeptide is Serine--tRNA ligase (Variovorax paradoxus (strain S110)).